A 627-amino-acid chain; its full sequence is Ras and EF-hand domain-containing protein homolog (627 aa).

A coiled-coil region spans residues 55–245 (YERVIRNFLR…RKLHDSNDGL (191 aa)). Ser266 and Ser272 each carry phosphoserine. GTP contacts are provided by residues 438–443 (AVGKSS), 541–544 (NKAD), and 578–579 (AK).

Belongs to the small GTPase superfamily. Rab family. Homodimer. Interacts with the dynein-dynactin complex.

The protein localises to the cytoplasm. Its subcellular location is the perinuclear region. Functionally, binds predominantly GDP, and also GTP. Acts as a dynein adapter protein that activates dynein-mediated transport and dynein-dynactin motility on microtubules. In Mus musculus (Mouse), this protein is Ras and EF-hand domain-containing protein homolog (Rasef).